Here is a 585-residue protein sequence, read N- to C-terminus: ATP-dependent lipid A-core flippase (585 aa).

The next 5 helical transmembrane spans lie at 16 to 36 (LWPYISFYKAGLSVAVVALII), 66 to 86 (FLSMMPYYLVGLMILRGASGF), 156 to 176 (IIGLMALMFWNSWQLSAILLV), 252 to 272 (AIANPVIQVIASFALVVVLVL), and 278 to 298 (LRAELTPGTFAVVFGAMFGLM). The region spanning 29–313 (VAVVALIINA…LTNVTSQFQR (285 aa)) is the ABC transmembrane type-1 domain. Residues 345–581 (IQVKNVTFTY…DGAYAQLHRI (237 aa)) form the ABC transporter domain. 379 to 386 (GRSGSGKS) serves as a coordination point for ATP.

This sequence belongs to the ABC transporter superfamily. Lipid exporter (TC 3.A.1.106) family. As to quaternary structure, homodimer.

It localises to the cell inner membrane. The catalysed reaction is ATP + H2O + lipid A-core oligosaccharideSide 1 = ADP + phosphate + lipid A-core oligosaccharideSide 2.. Functionally, involved in lipopolysaccharide (LPS) biosynthesis. Translocates lipid A-core from the inner to the outer leaflet of the inner membrane. Transmembrane domains (TMD) form a pore in the inner membrane and the ATP-binding domain (NBD) is responsible for energy generation. This is ATP-dependent lipid A-core flippase from Photobacterium profundum (strain SS9).